Here is a 296-residue protein sequence, read N- to C-terminus: Protease HtpX homolog (296 aa).

2 helical membrane-spanning segments follow: residues 7–27 (TVLL…LVAG) and 29–49 (QGMI…YFFS). H131 is a binding site for Zn(2+). Residue E132 is part of the active site. H135 lines the Zn(2+) pocket. Helical transmembrane passes span 141–161 (ILIS…ANMA) and 178–198 (IASI…ATLI). E207 is a binding site for Zn(2+).

The protein belongs to the peptidase M48B family. Requires Zn(2+) as cofactor.

It is found in the cell inner membrane. The sequence is that of Protease HtpX homolog from Sulfurihydrogenibium sp. (strain YO3AOP1).